Consider the following 571-residue polypeptide: Proline--tRNA ligase (571 aa).

This sequence belongs to the class-II aminoacyl-tRNA synthetase family. ProS type 1 subfamily. In terms of assembly, homodimer.

It is found in the cytoplasm. It catalyses the reaction tRNA(Pro) + L-proline + ATP = L-prolyl-tRNA(Pro) + AMP + diphosphate. In terms of biological role, catalyzes the attachment of proline to tRNA(Pro) in a two-step reaction: proline is first activated by ATP to form Pro-AMP and then transferred to the acceptor end of tRNA(Pro). As ProRS can inadvertently accommodate and process non-cognate amino acids such as alanine and cysteine, to avoid such errors it has two additional distinct editing activities against alanine. One activity is designated as 'pretransfer' editing and involves the tRNA(Pro)-independent hydrolysis of activated Ala-AMP. The other activity is designated 'posttransfer' editing and involves deacylation of mischarged Ala-tRNA(Pro). The misacylated Cys-tRNA(Pro) is not edited by ProRS. This Photobacterium profundum (strain SS9) protein is Proline--tRNA ligase.